Consider the following 349-residue polypeptide: Phosphate acyltransferase (349 aa).

Belongs to the PlsX family. Homodimer. Probably interacts with PlsY.

The protein resides in the cytoplasm. The catalysed reaction is a fatty acyl-[ACP] + phosphate = an acyl phosphate + holo-[ACP]. The protein operates within lipid metabolism; phospholipid metabolism. In terms of biological role, catalyzes the reversible formation of acyl-phosphate (acyl-PO(4)) from acyl-[acyl-carrier-protein] (acyl-ACP). This enzyme utilizes acyl-ACP as fatty acyl donor, but not acyl-CoA. This chain is Phosphate acyltransferase, found in Albidiferax ferrireducens (strain ATCC BAA-621 / DSM 15236 / T118) (Rhodoferax ferrireducens).